Reading from the N-terminus, the 24-residue chain is Brevinin-1Pa (24 aa).

C18 and C24 form a disulfide bridge.

As to expression, expressed by the skin glands.

Its subcellular location is the secreted. In terms of biological role, antibacterial activity against Gram-positive bacterium S.aureus and Gram-negative bacterium E.coli. Has activity against C.albicans. The chain is Brevinin-1Pa from Lithobates pipiens (Northern leopard frog).